A 1722-amino-acid polypeptide reads, in one-letter code: Signal-induced proliferation-associated 1-like protein 2 (1722 aa).

Disordered regions lie at residues 1–29 (MSDPRPSQAEKHKLGRAASKFKDPSRAMQ) and 45–73 (MGPATLNTSSLSEGGGGGGGPANGTPAVP). Residues 57–66 (EGGGGGGGPA) are compositionally biased toward gly residues. Phosphoserine occurs at positions 149, 380, and 384. Residues 362 to 404 (ASAASQTPVPVGPAGGCESPLGSKEDLNAKENPDADEGDGKSN) are disordered. Residues 384–403 (SKEDLNAKENPDADEGDGKS) are compositionally biased toward basic and acidic residues. A Rap-GAP domain is found at 596-813 (LLKLDEQGLS…RTRHEYLKDL (218 aa)). Residues 951–1027 (EMTLRRNGLG…VKVVIIQPHE (77 aa)) form the PDZ domain. At Ser1030 the chain carries Phosphoserine. Disordered stretches follow at residues 1068-1172 (HRVP…DHED), 1197-1246 (ERAL…FGSG), and 1328-1361 (AADGSMGDLSEVSSHSSGSHRSGSPSTHCSKSTG). 2 stretches are compositionally biased toward low complexity: residues 1091–1103 (LQCQPLLQQAQAA) and 1120–1131 (SSPSNQSSSSDP). The segment covering 1197–1218 (ERALQKDGSCKDSPNKLSHIGD) has biased composition (basic and acidic residues). Residues 1220 to 1237 (SCSSHSSSNTLSSNTSSN) show a composition bias toward low complexity. Residue Ser1245 is modified to Phosphoserine. Positions 1328 to 1355 (AADGSMGDLSEVSSHSSGSHRSGSPSTH) are enriched in low complexity. 7 positions are modified to phosphoserine: Ser1461, Ser1472, Ser1478, Ser1488, Ser1549, Ser1552, and Ser1591. The stretch at 1652–1712 (STLTGKVNQL…ATAQLRTFTE (61 aa)) forms a coiled coil.

The polypeptide is Signal-induced proliferation-associated 1-like protein 2 (Sipa1l2) (Rattus norvegicus (Rat)).